Consider the following 195-residue polypeptide: MKIIVASSNKGKIKEIKKFFEGIEILPYSELIEPFEIEENGTTFKDNAIIKAKTIYEKLPGSIVLADDSGISVPVLGGVPGIYSARFAGAGASDKDNLYKLIDELKKRNIKKTYAYYTAAIALATPYGIFTTHGFMHGNVIDEARGNKGFGYDPMFIPKGFDKTLGELDENIKKSISHRSKALELANILLKSINN.

7-12 (SSNKGK) contributes to the substrate binding site. Mg(2+) is bound by residues E38 and D68. The active-site Proton acceptor is D68. Residues S69, 150 to 153 (FGYD), K173, and 178 to 179 (HR) each bind substrate.

This sequence belongs to the HAM1 NTPase family. As to quaternary structure, homodimer. Requires Mg(2+) as cofactor.

The catalysed reaction is XTP + H2O = XMP + diphosphate + H(+). It carries out the reaction dITP + H2O = dIMP + diphosphate + H(+). It catalyses the reaction ITP + H2O = IMP + diphosphate + H(+). Functionally, pyrophosphatase that catalyzes the hydrolysis of nucleoside triphosphates to their monophosphate derivatives, with a high preference for the non-canonical purine nucleotides XTP (xanthosine triphosphate), dITP (deoxyinosine triphosphate) and ITP. Seems to function as a house-cleaning enzyme that removes non-canonical purine nucleotides from the nucleotide pool, thus preventing their incorporation into DNA/RNA and avoiding chromosomal lesions. The sequence is that of dITP/XTP pyrophosphatase from Nautilia profundicola (strain ATCC BAA-1463 / DSM 18972 / AmH).